Reading from the N-terminus, the 606-residue chain is NADH-ubiquinone oxidoreductase chain 5 (606 aa).

16 helical membrane passes run 1–21 (MNLFTSFVLLTLLILFTPIMV), 35–55 (YVKNIVFCAFITSLIPAMMYL), 87–107 (LMFMPVALFITWSIMEFSMWY), 114–134 (INQFFKYLLLFLITMLILVTA), 140–160 (LFIGWEGVGIMSFLLIGWWFG), 171–191 (AILYNRIGDIGLLASMAWFLS), 211–233 (FPLMGLVLAAAGKSAQFGLHPWL), 241–261 (TPVSALLHSSTMVVAGIFLLV), 272–292 (LIQTVTLCLGAITTLFTAICA), 301–320 (IIAFSTSSQLGLMMVTIGLN), 325–347 (AFLHICTHAFFKAMLFLCSGSII), 366–386 (LPFTTTALIIGCLALTGMPFL), 413–433 (LTATSLTAVYSTRIIFFALLG), 457–477 (LLIGSIFAGFILSNSIPPVIT), 482–502 (MPLHLKLTALTMTTLGFIIAF), and 582–602 (GLIKLYFLSFLITITLSMILF).

Belongs to the complex I subunit 5 family. In terms of assembly, core subunit of respiratory chain NADH dehydrogenase (Complex I) which is composed of 45 different subunits.

It localises to the mitochondrion inner membrane. It catalyses the reaction a ubiquinone + NADH + 5 H(+)(in) = a ubiquinol + NAD(+) + 4 H(+)(out). Functionally, core subunit of the mitochondrial membrane respiratory chain NADH dehydrogenase (Complex I) which catalyzes electron transfer from NADH through the respiratory chain, using ubiquinone as an electron acceptor. Essential for the catalytic activity and assembly of complex I. In Balaenoptera musculus (Blue whale), this protein is NADH-ubiquinone oxidoreductase chain 5 (MT-ND5).